We begin with the raw amino-acid sequence, 239 residues long: Insulin-like growth factor-binding protein 3 receptor (239 aa).

A signal peptide spans 1 to 38 (MGSCQAGHYLHFCLAHHPPLVCATLILLLLGLSGLGLG). Over 39-205 (GFLLTHRTDL…EELTLCGSRL (167 aa)) the chain is Extracellular. Residues Asn-101 and Asn-167 are each glycosylated (N-linked (GlcNAc...) asparagine). Residues 206–226 (LVLGFFLILFCGLCCLTAACF) traverse the membrane as a helical segment. The Cytoplasmic segment spans residues 227–239 (HPRRESHWSRTRL).

As to quaternary structure, interacts with IGFBP3. Interacts with CASP8.

Its subcellular location is the cell membrane. Functionally, cell death receptor specific for IGFBP3, may mediate caspase-8-dependent apoptosis upon ligand binding. The sequence is that of Insulin-like growth factor-binding protein 3 receptor (TMEM219) from Bos taurus (Bovine).